A 101-amino-acid chain; its full sequence is ATP synthase subunit c (101 aa).

Transmembrane regions (helical) follow at residues A31 to Q51 and A81 to G101.

This sequence belongs to the ATPase C chain family. In terms of assembly, F-type ATPases have 2 components, F(1) - the catalytic core - and F(0) - the membrane proton channel. F(1) has five subunits: alpha(3), beta(3), gamma(1), delta(1), epsilon(1). F(0) has three main subunits: a(1), b(2) and c(10-14). The alpha and beta chains form an alternating ring which encloses part of the gamma chain. F(1) is attached to F(0) by a central stalk formed by the gamma and epsilon chains, while a peripheral stalk is formed by the delta and b chains.

It is found in the cell membrane. Its function is as follows. F(1)F(0) ATP synthase produces ATP from ADP in the presence of a proton or sodium gradient. F-type ATPases consist of two structural domains, F(1) containing the extramembraneous catalytic core and F(0) containing the membrane proton channel, linked together by a central stalk and a peripheral stalk. During catalysis, ATP synthesis in the catalytic domain of F(1) is coupled via a rotary mechanism of the central stalk subunits to proton translocation. In terms of biological role, key component of the F(0) channel; it plays a direct role in translocation across the membrane. A homomeric c-ring of between 10-14 subunits forms the central stalk rotor element with the F(1) delta and epsilon subunits. This chain is ATP synthase subunit c, found in Mesomycoplasma hyopneumoniae (strain 232) (Mycoplasma hyopneumoniae).